We begin with the raw amino-acid sequence, 92 residues long: MANSPQSKKRARQAEARAAVNKARRSRIRTFLRKVEEAIATGDASVAAAALKTAQPELARGVTKGVLHKNTVARKMSRLAHRVKVLSQPAAA.

The tract at residues 1–22 (MANSPQSKKRARQAEARAAVNK) is disordered.

The protein belongs to the bacterial ribosomal protein bS20 family.

Binds directly to 16S ribosomal RNA. This is Small ribosomal subunit protein bS20 from Cereibacter sphaeroides (strain ATCC 17029 / ATH 2.4.9) (Rhodobacter sphaeroides).